Here is a 427-residue protein sequence, read N- to C-terminus: Glutamate-1-semialdehyde 2,1-aminomutase (427 aa).

Residue Lys-265 is modified to N6-(pyridoxal phosphate)lysine.

This sequence belongs to the class-III pyridoxal-phosphate-dependent aminotransferase family. HemL subfamily. As to quaternary structure, homodimer. It depends on pyridoxal 5'-phosphate as a cofactor.

Its subcellular location is the cytoplasm. It catalyses the reaction (S)-4-amino-5-oxopentanoate = 5-aminolevulinate. Its pathway is porphyrin-containing compound metabolism; protoporphyrin-IX biosynthesis; 5-aminolevulinate from L-glutamyl-tRNA(Glu): step 2/2. This Pseudomonas entomophila (strain L48) protein is Glutamate-1-semialdehyde 2,1-aminomutase.